A 410-amino-acid polypeptide reads, in one-letter code: Peptidase T (410 aa).

Residue His-79 participates in Zn(2+) binding. Asp-81 is an active-site residue. Asp-142 is a Zn(2+) binding site. Residue Glu-176 is the Proton acceptor of the active site. Zn(2+) is bound by residues Glu-177, Asp-199, and His-381.

Belongs to the peptidase M20B family. Requires Zn(2+) as cofactor.

The protein resides in the cytoplasm. It catalyses the reaction Release of the N-terminal residue from a tripeptide.. Functionally, cleaves the N-terminal amino acid of tripeptides. This chain is Peptidase T, found in Bacillus cereus (strain ATCC 10987 / NRS 248).